The sequence spans 515 residues: Protein aaim-1 (515 aa).

The signal sequence occupies residues 1 to 16; the sequence is MRLLFFFSILYTASLC. 2 N-linked (GlcNAc...) asparagine glycosylation sites follow: asparagine 46 and asparagine 127. The interval 248–267 is disordered; that stretch reads RRTDPNSKFKPRPTTSQSNG. Asparagine 447 carries an N-linked (GlcNAc...) asparagine glycan.

Expressed in the terminal bulb of the pharynx and the posterior of the intestine (at protein level). Expressed by intestinal cells and secreted into the intestinal lumen (at protein level).

Its subcellular location is the secreted. Its function is as follows. Plays a role in promoting resistance to bacterial pathogens such as P.aeruginosa by inhibiting bacterial intestinal colonization. In terms of biological role, (Microbial infection) Promotes infection by microsporidian pathogens such as N.parisii in the early larval stages of development. Involved in ensuring the proper orientation and location of the spore proteins of N.parisii during intestinal cell invasion. The protein is Protein aaim-1 of Caenorhabditis elegans.